The primary structure comprises 504 residues: Maturase K (504 aa).

This sequence belongs to the intron maturase 2 family. MatK subfamily.

Its subcellular location is the plastid. The protein localises to the chloroplast. Functionally, usually encoded in the trnK tRNA gene intron. Probably assists in splicing its own and other chloroplast group II introns. The protein is Maturase K of Arabidopsis halleri.